The primary structure comprises 77 residues: Small nuclear ribonucleoprotein G (77 aa).

The 73-residue stretch at 4–76 folds into the Sm domain; the sequence is AGAPDLKKYL…VIMIETLDKM (73 aa).

The protein belongs to the snRNP Sm proteins family. In terms of assembly, belongs to the 40S cdc5-associated complex (or cwf complex), a spliceosome sub-complex reminiscent of a late-stage spliceosome composed of the U2, U5 and U6 snRNAs and at least brr2, cdc5, cwf2/prp3, cwf3/syf1, cwf4/syf3, cwf5/ecm2, spp42/cwf6, cwf7/spf27, cwf8, cwf9, cwf10, cwf11, cwf12, prp45/cwf13, cwf14, cwf15, cwf16, cwf17, cwf18, cwf19, cwf20, cwf21, cwf22, cwf23, cwf24, cwf25, cwf26, cyp7/cwf27, cwf28, cwf29/ist3, lea1, msl1, prp5/cwf1, prp10, prp12/sap130, prp17, prp22, sap61, sap62, sap114, sap145, slu7, smb1, smd1, smd3, smf1, smg1 and syf2.

It is found in the nucleus. The protein localises to the cytoplasm. Functionally, plays a role in pre-mRNA splicing as a core component of the spliceosomal U1, U2, U4 and U5 small nuclear ribonucleoproteins (snRNPs), the building blocks of the spliceosome. This chain is Small nuclear ribonucleoprotein G (smg1), found in Schizosaccharomyces pombe (strain 972 / ATCC 24843) (Fission yeast).